The primary structure comprises 274 residues: Large ribosomal subunit protein uL2 (274 aa).

2 disordered regions span residues 28–55 and 224–274; these read APHA…RHVG and VAMN…RRRK.

It belongs to the universal ribosomal protein uL2 family. In terms of assembly, part of the 50S ribosomal subunit. Forms a bridge to the 30S subunit in the 70S ribosome.

One of the primary rRNA binding proteins. Required for association of the 30S and 50S subunits to form the 70S ribosome, for tRNA binding and peptide bond formation. It has been suggested to have peptidyltransferase activity; this is somewhat controversial. Makes several contacts with the 16S rRNA in the 70S ribosome. The polypeptide is Large ribosomal subunit protein uL2 (Pseudomonas putida (strain W619)).